The sequence spans 359 residues: Probable dual-specificity RNA methyltransferase RlmN (359 aa).

The active-site Proton acceptor is the glutamate 91. The Radical SAM core domain occupies 97-329 (QHYGHSVCVT…KKNGVNCVVR (233 aa)). Cysteine 104 and cysteine 340 are disulfide-bonded. 3 residues coordinate [4Fe-4S] cluster: cysteine 111, cysteine 115, and cysteine 118. S-adenosyl-L-methionine is bound by residues 163–164 (GE), serine 195, 218–220 (SLH), and asparagine 296. Residue cysteine 340 is the S-methylcysteine intermediate of the active site.

Belongs to the radical SAM superfamily. RlmN family. It depends on [4Fe-4S] cluster as a cofactor.

Its subcellular location is the cytoplasm. The enzyme catalyses adenosine(2503) in 23S rRNA + 2 reduced [2Fe-2S]-[ferredoxin] + 2 S-adenosyl-L-methionine = 2-methyladenosine(2503) in 23S rRNA + 5'-deoxyadenosine + L-methionine + 2 oxidized [2Fe-2S]-[ferredoxin] + S-adenosyl-L-homocysteine. The catalysed reaction is adenosine(37) in tRNA + 2 reduced [2Fe-2S]-[ferredoxin] + 2 S-adenosyl-L-methionine = 2-methyladenosine(37) in tRNA + 5'-deoxyadenosine + L-methionine + 2 oxidized [2Fe-2S]-[ferredoxin] + S-adenosyl-L-homocysteine. Functionally, specifically methylates position 2 of adenine 2503 in 23S rRNA and position 2 of adenine 37 in tRNAs. This Streptococcus pyogenes serotype M18 (strain MGAS8232) protein is Probable dual-specificity RNA methyltransferase RlmN.